The chain runs to 311 residues: Olfactory receptor 5L2 (311 aa).

The Extracellular portion of the chain corresponds to 1–25 (MGKENCTTVAEFILLGLSDVPELRV). N5 carries an N-linked (GlcNAc...) asparagine glycan. A helical membrane pass occupies residues 26 to 46 (CLFLLFLLIYGVTLLANLGMT). At 47-54 (ALIQVSSR) the chain is on the cytoplasmic side. A helical transmembrane segment spans residues 55 to 75 (LHTPVYFFLSHLSFVDFCYSS). Topologically, residues 76 to 99 (IIVPKMLANIFNKDKAISFLGCMV) are extracellular. A disulfide bond links C97 and C189. The chain crosses the membrane as a helical span at residues 100–120 (QFYLFCTCGVTEVFLLAVMAY). Residues 121-139 (DRFVAICNPLLYMVTMSQK) lie on the Cytoplasmic side of the membrane. A helical transmembrane segment spans residues 140 to 160 (LRVELTSCCYFCGTVCSLIHS). Residues 161 to 196 (SLALRILFYRSNVINHFFCDLPPLLSLACSDVTVNE) lie on the Extracellular side of the membrane. N195 carries an N-linked (GlcNAc...) asparagine glycan. Residues 197–217 (TLLFLVATLNESVTIMIILTS) traverse the membrane as a helical segment. Residues 218–237 (YLLILTTILKIHSAESRHKA) are Cytoplasmic-facing. The helical transmembrane segment at 238-258 (FSTCASHLTAITVSHGTILYI) threads the bilayer. Topologically, residues 259-271 (YCRPSSGNSGDVD) are extracellular. Residues 272 to 292 (KVATVFYTVVIPMLNPLIYSL) traverse the membrane as a helical segment. Residues 293–311 (RNKDVNKALRKVMGSKIHS) lie on the Cytoplasmic side of the membrane.

This sequence belongs to the G-protein coupled receptor 1 family.

It localises to the cell membrane. Functionally, odorant receptor. The polypeptide is Olfactory receptor 5L2 (OR5L2) (Homo sapiens (Human)).